The sequence spans 1477 residues: FHA domain-containing protein PS1 (1477 aa).

The region spanning leucine 64–isoleucine 115 is the FHA domain. 7 disordered regions span residues glutamate 188–threonine 218, leucine 588–phenylalanine 644, proline 789–phenylalanine 818, leucine 832–serine 911, alanine 942–valine 979, isoleucine 1004–leucine 1030, and valine 1159–serine 1225. Residues glycine 589 to glutamine 607 show a composition bias toward basic and acidic residues. Positions leucine 832–proline 849 are enriched in polar residues. Residues glutamine 870–glutamate 883 show a composition bias toward low complexity. 4 stretches are compositionally biased toward polar residues: residues asparagine 885–isoleucine 897, leucine 957–glutamate 971, asparagine 1007–arginine 1018, and serine 1198–alanine 1212. Residues serine 1213–serine 1225 show a composition bias toward low complexity.

Functionally, required for normal spindle orientation at male meiosis II and normal formation of tetrad of microspores. Not involved in female meiosis. In Arabidopsis thaliana (Mouse-ear cress), this protein is FHA domain-containing protein PS1.